The chain runs to 346 residues: Methylthioribose-1-phosphate isomerase (346 aa).

Substrate contacts are provided by residues 46-48, R89, and Q196; that span reads RGA. D237 functions as the Proton donor in the catalytic mechanism. Substrate is bound at residue 247–248; sequence NK.

It belongs to the eIF-2B alpha/beta/delta subunits family. MtnA subfamily.

The catalysed reaction is 5-(methylsulfanyl)-alpha-D-ribose 1-phosphate = 5-(methylsulfanyl)-D-ribulose 1-phosphate. It functions in the pathway amino-acid biosynthesis; L-methionine biosynthesis via salvage pathway; L-methionine from S-methyl-5-thio-alpha-D-ribose 1-phosphate: step 1/6. In terms of biological role, catalyzes the interconversion of methylthioribose-1-phosphate (MTR-1-P) into methylthioribulose-1-phosphate (MTRu-1-P). This Geobacter sulfurreducens (strain ATCC 51573 / DSM 12127 / PCA) protein is Methylthioribose-1-phosphate isomerase.